We begin with the raw amino-acid sequence, 710 residues long: Early transcription factor 82 kDa subunit (710 aa).

This sequence belongs to the poxviridae VETF large subunit family. As to quaternary structure, heterodimer of a 70 kDa and a 82 kDa subunit. Part of the early transcription complex composed of ETF, RAP94/OPG109, and the DNA-directed RNA polymerase.

It localises to the virion. Functionally, acts with RNA polymerase to initiate transcription from early gene promoters. Is recruited by the RPO-associated protein of 94 kDa RAP94/OPG109 to form the early transcription complex, which also contains the core RNA polymerase. ETF heterodimer binds to early gene promoters. The protein is Early transcription factor 82 kDa subunit (OPG133) of Vaccinia virus (strain Ankara) (VACV).